Reading from the N-terminus, the 187-residue chain is Flavin prenyltransferase UbiX (187 aa).

Residues 9–11 (GAS), Ser-34, and Arg-123 contribute to the FMN site. Residues Tyr-153 and Lys-169 each coordinate dimethylallyl phosphate.

The protein belongs to the UbiX/PAD1 family.

The enzyme catalyses dimethylallyl phosphate + FMNH2 = prenylated FMNH2 + phosphate. Flavin prenyltransferase that catalyzes the synthesis of the prenylated FMN cofactor (prenyl-FMN) for 4-hydroxy-3-polyprenylbenzoic acid decarboxylase UbiD. The prenyltransferase is metal-independent and links a dimethylallyl moiety from dimethylallyl monophosphate (DMAP) to the flavin N5 and C6 atoms of FMN. This chain is Flavin prenyltransferase UbiX, found in Helicobacter pylori (strain J99 / ATCC 700824) (Campylobacter pylori J99).